An 838-amino-acid chain; its full sequence is Translation initiation factor IF-2 (838 aa).

The segment at 1 to 235 (MSDTDGKKPL…RSLAAMKREQ (235 aa)) is disordered. The span at 18 to 27 (SGQVKQSFSH) shows a compositional bias: polar residues. A compositionally biased stretch (low complexity) spans 50–60 (SGSSTTTSSPS). Residues 88–156 (KLREVDDAKR…AARRAEEAKR (69 aa)) show a composition bias toward basic and acidic residues. Over residues 162–177 (PAAAQPDAADSRASAP) the composition is skewed to low complexity. The segment covering 187–208 (SRKEREREADRDRTTKKDDSRR) has biased composition (basic and acidic residues). In terms of domain architecture, tr-type G spans 335 to 509 (PRPPIITIMG…ELLDLRANPK (175 aa)). The segment at 344–351 (GHVDHGKT) is G1. A GTP-binding site is contributed by 344 to 351 (GHVDHGKT). The tract at residues 369–373 (GITQH) is G2. The segment at 391-394 (DTPG) is G3. GTP is bound by residues 391–395 (DTPGH) and 445–448 (NKID). Positions 445–448 (NKID) are G4. The interval 481-483 (SAK) is G5.

The protein belongs to the TRAFAC class translation factor GTPase superfamily. Classic translation factor GTPase family. IF-2 subfamily.

It is found in the cytoplasm. Functionally, one of the essential components for the initiation of protein synthesis. Protects formylmethionyl-tRNA from spontaneous hydrolysis and promotes its binding to the 30S ribosomal subunits. Also involved in the hydrolysis of GTP during the formation of the 70S ribosomal complex. The sequence is that of Translation initiation factor IF-2 from Cereibacter sphaeroides (strain ATCC 17025 / ATH 2.4.3) (Rhodobacter sphaeroides).